Reading from the N-terminus, the 340-residue chain is Putative cystathionine beta-lyase (340 aa).

Lysine 208 bears the N6-(pyridoxal phosphate)lysine mark.

It belongs to the trans-sulfuration enzymes family. It depends on pyridoxal 5'-phosphate as a cofactor.

It carries out the reaction L,L-cystathionine + H2O = L-homocysteine + pyruvate + NH4(+). It catalyses the reaction an S-substituted L-cysteine + H2O = a thiol + pyruvate + NH4(+). It functions in the pathway amino-acid biosynthesis; L-methionine biosynthesis via de novo pathway; L-homocysteine from L-cystathionine: step 1/1. This Saccharomyces cerevisiae (strain ATCC 204508 / S288c) (Baker's yeast) protein is Putative cystathionine beta-lyase (IRC7).